The primary structure comprises 394 residues: Probable dual specificity protein phosphatase DDB_G0281963 (394 aa).

Residues 2–142 enclose the Tyrosine-protein phosphatase domain; it reads NDVSRIFPGF…LKKYELILKK (141 aa). Cys86 functions as the Phosphocysteine intermediate in the catalytic mechanism. Positions 147–191 are disordered; the sequence is PQIVEKESEEEDDDEDDDDDDYDSDEDDDDDSEDDDFEEEFDNVV. The span at 153-188 shows a compositional bias: acidic residues; sequence ESEEEDDDEDDDDDDYDSDEDDDDDSEDDDFEEEFD.

The protein belongs to the protein-tyrosine phosphatase family. Non-receptor class dual specificity subfamily.

It carries out the reaction O-phospho-L-tyrosyl-[protein] + H2O = L-tyrosyl-[protein] + phosphate. The enzyme catalyses O-phospho-L-seryl-[protein] + H2O = L-seryl-[protein] + phosphate. The catalysed reaction is O-phospho-L-threonyl-[protein] + H2O = L-threonyl-[protein] + phosphate. Functionally, has a dual specificity toward Ser/Thr and Tyr-containing proteins. The polypeptide is Probable dual specificity protein phosphatase DDB_G0281963 (Dictyostelium discoideum (Social amoeba)).